We begin with the raw amino-acid sequence, 412 residues long: Histone-lysine N-methyltransferase SUV39H1 (412 aa).

Residues 1–89 are interaction with SIRT1; it reads MAENLKGCSV…LKCIRVLKQF (89 aa). The region spanning 43-101 is the Chromo domain; it reads FEVEYLCDYKKIREQEYYLVKWRGYPDSENTWEPRQNLKCIRVLKQFHKDLERELVRRH. A Pre-SET domain is found at 179–240; the sequence is VGCECQDCLL…DCPNRVVQKG (62 aa). Zn(2+)-binding residues include cysteine 181, cysteine 183, cysteine 186, cysteine 194, cysteine 195, cysteine 222, cysteine 226, cysteine 228, and cysteine 232. The SET domain occupies 243 to 366; that stretch reads YDLCIFRTND…AGEELTFDYN (124 aa). 254–256 lines the S-adenosyl-L-methionine pocket; sequence RGW. The mediates interaction with MECOM stretch occupies residues 255 to 377; the sequence is GWGVRTLEKI…QVDPVDMEST (123 aa). Lysine 266 carries the N6-acetyllysine modification. S-adenosyl-L-methionine-binding positions include tyrosine 297 and 323 to 324; that span reads NH. Zn(2+) is bound at residue cysteine 326. Position 391 is a phosphoserine (serine 391). The Post-SET domain occupies 396 to 412; that stretch reads VRIECKCGTTACRKYLF. Cysteine 400, cysteine 402, and cysteine 407 together coordinate Zn(2+).

This sequence belongs to the class V-like SAM-binding methyltransferase superfamily. Histone-lysine methyltransferase family. Suvar3-9 subfamily. Interacts with CCAR2 and GFI1B. Component of the eNoSC complex, composed of SIRT1, SUV39H1 and RRP8. Interacts with H3 and H4 histones. Interacts with DNMT3B, CBX1, CBX4, MBD1, RUNX1, RUNX3, MYOD1, SMAD5 and RB1. Interacts with SBF1 through the SET domain. Interacts with HDAC1 and HDAC2 through the N-terminus and associates with the core histone deacetylase complex composed of HDAC1, HDAC2, RBBP4 and RBBP7. Interacts (via SET domain) with MECOM; enhances MECOM transcriptional repression activity. Interacts with LMNA; the interaction increases stability of SUV39H1. The large PER complex involved in the histone methylation is composed of at least PER2, CBX3, TRIM28, SUV39H1 and/or SUV39H2; CBX3 mediates the formation of the complex. Phosphorylated on serine residues, and to a lesser degree, on threonine residues. Post-translationally, acetylated at Lys-266, leading to inhibition of enzyme activity. SIRT1-mediated deacetylation relieves this inhibition. In terms of processing, ubiquitinated by the DCX(DCAF13) E3 ubiquitin ligase complex, leading to its degradation. Widely expressed.

It is found in the nucleus. The protein localises to the nucleus lamina. It localises to the nucleoplasm. The protein resides in the chromosome. Its subcellular location is the centromere. The enzyme catalyses L-lysyl(9)-[histone H3] + 3 S-adenosyl-L-methionine = N(6),N(6),N(6)-trimethyl-L-lysyl(9)-[histone H3] + 3 S-adenosyl-L-homocysteine + 3 H(+). Its activity is regulated as follows. Negatively regulated by CCAR2. Its function is as follows. Histone methyltransferase that specifically trimethylates 'Lys-9' of histone H3 using monomethylated H3 'Lys-9' as substrate. H3 'Lys-9' trimethylation represents a specific tag for epigenetic transcriptional repression by recruiting HP1 (CBX1, CBX3 and/or CBX5) proteins to methylated histones. Mainly functions in heterochromatin regions, thereby playing a central role in the establishment of constitutive heterochromatin at pericentric and telomere regions. H3 'Lys-9' trimethylation is also required to direct DNA methylation at pericentric repeats. SUV39H1 is targeted to histone H3 via its interaction with RB1 and is involved in many processes, such as repression of MYOD1-stimulated differentiation, regulation of the control switch for exiting the cell cycle and entering differentiation, repression by the PML-RARA fusion protein, BMP-induced repression, repression of switch recombination to IgA and regulation of telomere length. Component of the eNoSC (energy-dependent nucleolar silencing) complex, a complex that mediates silencing of rDNA in response to intracellular energy status and acts by recruiting histone-modifying enzymes. The eNoSC complex is able to sense the energy status of cell: upon glucose starvation, elevation of NAD(+)/NADP(+) ratio activates SIRT1, leading to histone H3 deacetylation followed by dimethylation of H3 at 'Lys-9' (H3K9me2) by SUV39H1 and the formation of silent chromatin in the rDNA locus. Recruited by the PER complex to the E-box elements of the circadian target genes such as PER2 itself or PER1, contributes to the conversion of local chromatin to a heterochromatin-like repressive state through H3 'Lys-9' trimethylation. The sequence is that of Histone-lysine N-methyltransferase SUV39H1 (Suv39h1) from Mus musculus (Mouse).